Here is a 1053-residue protein sequence, read N- to C-terminus: MLQKREKVLLLRTFQGRTLRIVREHYLRPSVPCNSPLCPQPAACRNDGKLLAAEVTHYVIPDWKVVQDYLEVLEFPELKGVIFMQTACQAVQHQRGRRQYNKLRNLLKDARHDCVLFANEFQQHCYLPREKGEAMEKWQTRSIYNSAVWYYHHCEDRMPIVMVTEDEEAIQKYGSETEGVFVISFKNYLDNFWPDLKAAHDLCDSILQSRRERETESQETHGKEYPEHLPLEVLEAGIKSGRYIQGILNVNKHRAQIEAFVRLHGASSKDSGLVSDILIHGSKARNRSIHGDVVVVEMLPKSEWKGRTAALGENDSDDKASGESPSEPMPTGRVVGILQKNWRDYVVTFPSKEEVQSQGKNAQKILVTPWDYRIPKIRISTQQAEALQDFRVVVRIDSWEATSVYPNGHFVRVLGRIGDLEGEIATILVENSISVVPFSEAQMCEMPVNTPENPWKVSPKEEQERKDLRTTHLVFSIDPKGCEDVDDTLSVRTLNNGNLELGVHIADVTHFVAPNSYIDVEARTRATTYYLADRRYDMLPSILSADLCSLLGGVDRYAVSVMWELDKTSYEIKKVWYGRTIIRSAYKLFYEAAQELLDGNFSIVDDIPELKALDKQSQQAKLEELVWAIGKLTDIARHIRAKRDRCGALELEGVEVRVQLDDKKNIRDLIPKQPLEVHETVAECMILANHWVAKKIWESFPHQALLRQHPPPHQEFFSELRECAKAKGFFIDTRSNKTLADSLDSANDPKDPLVNKLLRSMATQAMSNALYFSTGSCAEEEFHHYGLALDKYTHFTSPIRRYSDIVVHRLLMAAISKDKKMEIKENLFSNKNLEELCRHINNRNRAAQRSQKQSTELFQCMYFKDRDAETEERCIADGVIYSIRTNGVLVFIPRFGIKGAAYLKNKDSLVISCGPEGSSEWKPGSLQRSQNKIISTTAGGQSVTFHLFDHVTVRISVQASRCHSDTIRLEIVSNKPYMIPNTELCHQSSLLKSELVKEVTRSVEEAQLAQEVKGKVIQEEHQEYCQTKGRSLYTLLEEIRDLALLDVSDSCAM.

A CSD1 domain is found at 236–310 (AGIKSGRYIQ…KSEWKGRTAA (75 aa)). The segment at 306–332 (GRTAALGENDSDDKASGESPSEPMPTG) is disordered. One can recognise a CSD2 domain in the interval 365-431 (ILVTPWDYRI…GEIATILVEN (67 aa)). An RNB domain is found at 465-816 (RKDLRTTHLV…VHRLLMAAIS (352 aa)). At serine 989 the chain carries Phosphoserine.

This sequence belongs to the RNR ribonuclease family. Component of the RNA exosome complex. The catalytically inactive RNA exosome core (Exo-9) complex is believed to associate with catalytic subunits EXOSC10, and DIS3 or DIS3L in cytoplasmic- and nuclear-specific RNA exosome complex forms. It depends on Mg(2+) as a cofactor.

It localises to the cytoplasm. It catalyses the reaction Exonucleolytic cleavage in the 3'- to 5'-direction to yield nucleoside 5'-phosphates.. In terms of biological role, catalytic component of the RNA exosome complex which has 3'-&gt;5' exoribonuclease activity and participates in a multitude of cellular RNA processing and degradation events. In the cytoplasm, the RNA exosome complex is involved in general mRNA turnover and specifically degrades inherently unstable mRNAs containing AU-rich elements (AREs) within their 3' untranslated regions, and in RNA surveillance pathways, preventing translation of aberrant mRNAs. It seems to be involved in degradation of histone mRNA. The protein is DIS3-like exonuclease 1 (Dis3l) of Mus musculus (Mouse).